A 235-amino-acid chain; its full sequence is MIYAGILAGGTGTRMGISNLPKQFLELGNRPILIHTIEKFVLEPSIEKIVVGVHGDWVSHAEDLVDKYLPLYKERIIITKGGADRNTSIKKIIEAIDAYRPLTPEDIVVTHDSVRPFITLRMIQDNIQLAQNHDAVDTVVEAVDTIVESTNGQFITDIPNRAHLYQGQTPQTFRCKDFMDLYGSLSDEEKEILTDACKIFVIKGKDVALAKGEYSNLKITTVTDLKIAKSMIEKD.

Residues 7–10 (LAGG), 82–88 (GADRNTS), and S113 each bind CTP.

Belongs to the IspD/TarI cytidylyltransferase family. TarI subfamily.

The catalysed reaction is D-ribitol 5-phosphate + CTP + H(+) = CDP-L-ribitol + diphosphate. It functions in the pathway cell wall biogenesis; poly(ribitol phosphate) teichoic acid biosynthesis. Functionally, catalyzes the transfer of the cytidylyl group of CTP to D-ribitol 5-phosphate. The polypeptide is Ribitol-5-phosphate cytidylyltransferase (Streptococcus pneumoniae (strain ATCC 700669 / Spain 23F-1)).